The sequence spans 572 residues: MDHLHSSTAELNLLWGSLILEELTRHGVMHLCMAPGSRSTPLTLAAAAQDKLTRHLHFDERGLGFLALGLAKASQAPVAIITTSGTAVANLYPAIVEASLTHVPLIILSGDRPWELIGCGANQAIEQLGIFGGYARQLNLPTPDLRIGPEVLLSALDEQLANLDRPLHINCMYPEPLYPSEHRFDQFDSYLSRLGQWQDTQVPYLSVANASLSAFPPRDAMMRFVHGKGVIVAGTLTEAETPTELITLSQKLGWPLLTDAQSQLRQHPGAIGHIDQLLLNPRARALLDQAERVLVFGGRLLSKRLISYLAEKDWHSYWQVLPHQERLDPSHSNKQLWLGRAGDVCALEWPRSSEANWAASLISLNQSVEQDFIHHIDGGEFGEAQVIRAIAASHTAEQQLFIGNSLPVRLYDMFAPIGCCAASTYTNRGASGIDGLIATACGVARHSGRPTTLILGDLSALHDLNSLALARDCQSPLVIVVLNNDGGNIFNLLPVPTEELRSDFYRLSHGLEFGYGAAMFGLPYDRAEDMEAFIDAYQAALEHPGASVIEVTVAQDQASNQIRRMAEWIRSR.

It belongs to the TPP enzyme family. MenD subfamily. In terms of assembly, homodimer. Mg(2+) is required as a cofactor. Mn(2+) serves as cofactor. Requires thiamine diphosphate as cofactor.

It catalyses the reaction isochorismate + 2-oxoglutarate + H(+) = 5-enolpyruvoyl-6-hydroxy-2-succinyl-cyclohex-3-ene-1-carboxylate + CO2. It functions in the pathway quinol/quinone metabolism; 1,4-dihydroxy-2-naphthoate biosynthesis; 1,4-dihydroxy-2-naphthoate from chorismate: step 2/7. Its pathway is quinol/quinone metabolism; menaquinone biosynthesis. Functionally, catalyzes the thiamine diphosphate-dependent decarboxylation of 2-oxoglutarate and the subsequent addition of the resulting succinic semialdehyde-thiamine pyrophosphate anion to isochorismate to yield 2-succinyl-5-enolpyruvyl-6-hydroxy-3-cyclohexene-1-carboxylate (SEPHCHC). In Shewanella amazonensis (strain ATCC BAA-1098 / SB2B), this protein is 2-succinyl-5-enolpyruvyl-6-hydroxy-3-cyclohexene-1-carboxylate synthase.